A 421-amino-acid polypeptide reads, in one-letter code: MIPFSLKNGTLCVEDIPLPEIAAQYGTPCYVYSHSYLTERARRFTKALDGAGKGKSLVAFAVKANPSQAILASFAKEGLGADVVSAGEIRRAVHAGIPPERIVFSGVGKTAEEMRYALEIGIGQFNIESVSEIEMLAEVATSLGKKAAVALRINPDVDPHTHAKIATGKADTKFGIAAEDALSAYEKLASYPSLKIQGIASHIGSQITDLAPFEAAAERIYEIITALEKAGHAIETADLGGGLGVRYKDDQPEPPSVEAYGEMIKRVTKGWNCRLIFEPGRSLIANAGVLLSKVIRIKESKTARFVILDAAMNDLVRPTLYDAYHEIKAVTPSAQTYQADIVGPVCETGDIFARNRSISAVKADDLMAIMSAGAYGATMASAYNSRPLVAEVMVSGNKSALIRKRQSVEDLMRDEQKVEWL.

Lys63 carries the post-translational modification N6-(pyridoxal phosphate)lysine. Pyridoxal 5'-phosphate contacts are provided by residues Gly242 and 278 to 281; that span reads EPGR. The substrate site is built by Arg281, Arg317, and Tyr321. Catalysis depends on Cys346, which acts as the Proton donor. Substrate contacts are provided by Glu347 and Tyr375. Position 375 (Tyr375) interacts with pyridoxal 5'-phosphate.

Belongs to the Orn/Lys/Arg decarboxylase class-II family. LysA subfamily. As to quaternary structure, homodimer. Pyridoxal 5'-phosphate is required as a cofactor.

The enzyme catalyses meso-2,6-diaminopimelate + H(+) = L-lysine + CO2. It participates in amino-acid biosynthesis; L-lysine biosynthesis via DAP pathway; L-lysine from DL-2,6-diaminopimelate: step 1/1. In terms of biological role, specifically catalyzes the decarboxylation of meso-diaminopimelate (meso-DAP) to L-lysine. The sequence is that of Diaminopimelate decarboxylase from Zymomonas mobilis subsp. mobilis (strain ATCC 31821 / ZM4 / CP4).